A 115-amino-acid chain; its full sequence is Probable 4-amino-4-deoxy-L-arabinose-phosphoundecaprenol flippase subunit ArnE (115 aa).

The next 3 membrane-spanning stretches (helical) occupy residues 42–62 (PWPW…LLLL), 65–85 (VEVG…TLAA), and 93–112 (VDRR…ALLG). The 68-residue stretch at 46–113 (LALLALGLGL…IVAGVALLGR (68 aa)) folds into the EamA domain.

This sequence belongs to the ArnE family. In terms of assembly, heterodimer of ArnE and ArnF.

The protein resides in the cell inner membrane. The protein operates within bacterial outer membrane biogenesis; lipopolysaccharide biosynthesis. Its function is as follows. Translocates 4-amino-4-deoxy-L-arabinose-phosphoundecaprenol (alpha-L-Ara4N-phosphoundecaprenol) from the cytoplasmic to the periplasmic side of the inner membrane. The protein is Probable 4-amino-4-deoxy-L-arabinose-phosphoundecaprenol flippase subunit ArnE of Pseudomonas aeruginosa (strain LESB58).